A 444-amino-acid chain; its full sequence is Ribosomal protein uS12 methylthiotransferase RimO (444 aa).

The 117-residue stretch at 2 to 118 (LKIALESLGC…IDKILKELSE (117 aa)) folds into the MTTase N-terminal domain. The [4Fe-4S] cluster site is built by Cys11, Cys47, Cys81, Cys155, Cys159, and Cys162. Positions 141 to 371 (STPSYMAYLK…MMIQQKISEE (231 aa)) constitute a Radical SAM core domain. The TRAM domain maps to 374-441 (DKKIGKTYEV…EYDLMGDVLY (68 aa)).

This sequence belongs to the methylthiotransferase family. RimO subfamily. The cofactor is [4Fe-4S] cluster.

Its subcellular location is the cytoplasm. The enzyme catalyses L-aspartate(89)-[ribosomal protein uS12]-hydrogen + (sulfur carrier)-SH + AH2 + 2 S-adenosyl-L-methionine = 3-methylsulfanyl-L-aspartate(89)-[ribosomal protein uS12]-hydrogen + (sulfur carrier)-H + 5'-deoxyadenosine + L-methionine + A + S-adenosyl-L-homocysteine + 2 H(+). Its function is as follows. Catalyzes the methylthiolation of an aspartic acid residue of ribosomal protein uS12. The protein is Ribosomal protein uS12 methylthiotransferase RimO of Clostridioides difficile (strain 630) (Peptoclostridium difficile).